A 302-amino-acid chain; its full sequence is Oxygen-dependent coproporphyrinogen-III oxidase (302 aa).

Position 94 (Ser-94) interacts with substrate. Positions 98 and 108 each coordinate a divalent metal cation. Catalysis depends on His-108, which acts as the Proton donor. 110-112 serves as a coordination point for substrate; that stretch reads NVR. Residues His-147 and His-177 each contribute to the a divalent metal cation site. The tract at residues 242–277 is important for dimerization; sequence YVEFNLVFDRGTLFGLQSGGRAESILMSMPPVANWR. 260–262 contributes to the substrate binding site; the sequence is GGR.

It belongs to the aerobic coproporphyrinogen-III oxidase family. Homodimer. A divalent metal cation serves as cofactor.

It localises to the cytoplasm. The enzyme catalyses coproporphyrinogen III + O2 + 2 H(+) = protoporphyrinogen IX + 2 CO2 + 2 H2O. It functions in the pathway porphyrin-containing compound metabolism; protoporphyrin-IX biosynthesis; protoporphyrinogen-IX from coproporphyrinogen-III (O2 route): step 1/1. Involved in the heme biosynthesis. Catalyzes the aerobic oxidative decarboxylation of propionate groups of rings A and B of coproporphyrinogen-III to yield the vinyl groups in protoporphyrinogen-IX. In Ralstonia pickettii (strain 12J), this protein is Oxygen-dependent coproporphyrinogen-III oxidase.